We begin with the raw amino-acid sequence, 322 residues long: Sideroflexin-2 (322 aa).

M1 bears the N-acetylmethionine mark. The next 5 membrane-spanning stretches (helical) occupy residues 99–119 (GMLI…VIFW), 147–167 (ALSY…MNMW), 174–194 (LVGR…NIPM), 223–243 (VGIA…MILL), and 266–286 (LQVL…CGLF).

This sequence belongs to the sideroflexin family. As to expression, expressed in brain, heart, kidney, spleen, thymus, liver, stomach and skin.

The protein resides in the mitochondrion inner membrane. The protein localises to the mitochondrion outer membrane. The catalysed reaction is L-serine(in) = L-serine(out). Functionally, mitochondrial amino-acid transporter that mediates transport of serine into mitochondria. Involved in mitochondrial iron homeostasis by regulating heme biosynthesis. This chain is Sideroflexin-2, found in Mus musculus (Mouse).